A 908-amino-acid polypeptide reads, in one-letter code: Translation initiation factor IF-2 (908 aa).

A disordered region spans residues 145 to 312 (EIPGLTQRAK…KGKKRQAEKI (168 aa)). Residues 167 to 177 (VVERPEARPSA) show a composition bias toward basic and acidic residues. 2 stretches are compositionally biased toward low complexity: residues 194–217 (RPEGGYRPAGPRPAGQRPEGPRPG) and 263–276 (VAGAGKKGPAGAAV). A compositionally biased stretch (basic and acidic residues) spans 278 to 296 (KRKEEFKKTELFEKHERVF). A tr-type G domain is found at 408–577 (KRPPVVTIMG…LLQADVLELK (170 aa)). Positions 417–424 (GHVDHGKT) are G1. 417–424 (GHVDHGKT) provides a ligand contact to GTP. The tract at residues 442–446 (GITQH) is G2. The interval 463-466 (DTPG) is G3. GTP contacts are provided by residues 463 to 467 (DTPGH) and 517 to 520 (NKID). Positions 517–520 (NKID) are G4. Positions 553–555 (SAK) are G5.

This sequence belongs to the TRAFAC class translation factor GTPase superfamily. Classic translation factor GTPase family. IF-2 subfamily.

The protein resides in the cytoplasm. One of the essential components for the initiation of protein synthesis. Protects formylmethionyl-tRNA from spontaneous hydrolysis and promotes its binding to the 30S ribosomal subunits. Also involved in the hydrolysis of GTP during the formation of the 70S ribosomal complex. The polypeptide is Translation initiation factor IF-2 (Geotalea daltonii (strain DSM 22248 / JCM 15807 / FRC-32) (Geobacter daltonii)).